The primary structure comprises 818 residues: IQ and AAA domain-containing protein 1-like (818 aa).

The IQ domain maps to 206–235 (QGQAAVTIQKVWKGYLQRKRTQQDRRMEME). Disordered stretches follow at residues 344-377 (QMQE…AKKG) and 458-482 (EERP…KDLT). The segment covering 463–476 (RAPKKTPGKKTGKK) has biased composition (basic residues). 567 to 574 (GPSGMGKK) contributes to the ATP binding site. A disordered region spans residues 795–818 (SMKHRMDQLEAEEAKLDKEKKKRK). Basic and acidic residues predominate over residues 798 to 818 (HRMDQLEAEEAKLDKEKKKRK).

Belongs to the AAA ATPase family.

This Homo sapiens (Human) protein is IQ and AAA domain-containing protein 1-like (IQCA1L).